Here is a 157-residue protein sequence, read N- to C-terminus: Transcription elongation factor GreA (157 aa).

The interval 1–24 (MDKFPMTPEGYHALDEELKRRQQE) is disordered. A compositionally biased stretch (basic and acidic residues) spans 12–24 (HALDEELKRRQQE). The stretch at 53–73 (EAQSLNEGRIAELEDKLSRAE) forms a coiled coil.

The protein belongs to the GreA/GreB family.

Necessary for efficient RNA polymerase transcription elongation past template-encoded arresting sites. The arresting sites in DNA have the property of trapping a certain fraction of elongating RNA polymerases that pass through, resulting in locked ternary complexes. Cleavage of the nascent transcript by cleavage factors such as GreA or GreB allows the resumption of elongation from the new 3'terminus. GreA releases sequences of 2 to 3 nucleotides. This chain is Transcription elongation factor GreA, found in Beijerinckia indica subsp. indica (strain ATCC 9039 / DSM 1715 / NCIMB 8712).